A 262-amino-acid polypeptide reads, in one-letter code: Ninja-family protein 3 (262 aa).

Positions 48 to 69 (RRNSLTCNTSKEAAGQSPEEMN) are disordered.

The protein belongs to the Ninja family.

Its subcellular location is the nucleus. The sequence is that of Ninja-family protein 3 from Zea mays (Maize).